We begin with the raw amino-acid sequence, 159 residues long: Heterocyst differentiation protein HetP (159 aa).

The interval 1–50 (MNQNTTGITNYNKAINPQQFDKVVEAILAGKYSWACVLMLRFAGYNPMHY) is required to complement a hetP deletion.

The protein belongs to the HetP family. In bacterial two-hybrid assays interacts weakly with Asl1930, Alr2902 and Alr3234.

Functionally, promotes heterocyst differentiation and commitment when nitrogen is limiting. Interplay between the 4 HetP paralogs controls the timing of commitment to heterocyst formation and its duration. Epistatic analysis show that the 3 paralogs act upstream of hetP to delay commitment (asl1930, alr3234) or inhibit development (alr2902). Asl1930 and Alr3234 must also attenuate the activity of Alr2902. Required for heterocyst formation. Functions directly downstream of master regulator HetR to promote heterocyst differentiation, functioning downstream of patterning (cell choice). Partially functionally redundant with homologs alr2902 and asl1930 but not alr3234. Overexpression leads to more than wild-type levels of heterocysts. Overexpression in the absence of hetR partially bypasses hetR deletion, allowing differentiation of heterocysts, although they only fix nitrogen in the absence of oxygen (a Fox- Fix+ phenotype), suggesting they are not fully. This chain is Heterocyst differentiation protein HetP, found in Nostoc sp. (strain PCC 7120 / SAG 25.82 / UTEX 2576).